The chain runs to 341 residues: Holliday junction branch migration complex subunit RuvB (341 aa).

The interval 1 to 182 (MKDRLISAVA…FGVISRLEYY (182 aa)) is large ATPase domain (RuvB-L). ATP is bound by residues L21, R22, G63, K66, T67, T68, 129–131 (EDY), R172, Y182, and R219. Residue T67 coordinates Mg(2+). The tract at residues 183–253 (RPEDLVLIVN…VAVEALKFLE (71 aa)) is small ATPAse domain (RuvB-S). The tract at residues 256 to 341 (PLGLDFADRR…REETDQVSLW (86 aa)) is head domain (RuvB-H). The DNA site is built by R311 and R316.

Belongs to the RuvB family. Homohexamer. Forms an RuvA(8)-RuvB(12)-Holliday junction (HJ) complex. HJ DNA is sandwiched between 2 RuvA tetramers; dsDNA enters through RuvA and exits via RuvB. An RuvB hexamer assembles on each DNA strand where it exits the tetramer. Each RuvB hexamer is contacted by two RuvA subunits (via domain III) on 2 adjacent RuvB subunits; this complex drives branch migration. In the full resolvosome a probable DNA-RuvA(4)-RuvB(12)-RuvC(2) complex forms which resolves the HJ.

The protein localises to the cytoplasm. It carries out the reaction ATP + H2O = ADP + phosphate + H(+). Its function is as follows. The RuvA-RuvB-RuvC complex processes Holliday junction (HJ) DNA during genetic recombination and DNA repair, while the RuvA-RuvB complex plays an important role in the rescue of blocked DNA replication forks via replication fork reversal (RFR). RuvA specifically binds to HJ cruciform DNA, conferring on it an open structure. The RuvB hexamer acts as an ATP-dependent pump, pulling dsDNA into and through the RuvAB complex. RuvB forms 2 homohexamers on either side of HJ DNA bound by 1 or 2 RuvA tetramers; 4 subunits per hexamer contact DNA at a time. Coordinated motions by a converter formed by DNA-disengaged RuvB subunits stimulates ATP hydrolysis and nucleotide exchange. Immobilization of the converter enables RuvB to convert the ATP-contained energy into a lever motion, pulling 2 nucleotides of DNA out of the RuvA tetramer per ATP hydrolyzed, thus driving DNA branch migration. The RuvB motors rotate together with the DNA substrate, which together with the progressing nucleotide cycle form the mechanistic basis for DNA recombination by continuous HJ branch migration. Branch migration allows RuvC to scan DNA until it finds its consensus sequence, where it cleaves and resolves cruciform DNA. The chain is Holliday junction branch migration complex subunit RuvB from Pelotomaculum thermopropionicum (strain DSM 13744 / JCM 10971 / SI).